The following is a 109-amino-acid chain: Spermidine export protein MdtI (109 aa).

Helical transmembrane passes span 6 to 26 (WIHGAWLGLAIVLEIAANVLL), 36 to 56 (CYGILSLAAVLAAFSALSQAV), 64 to 84 (AYALWGGFGIAATLAAGWVLF), and 88 to 108 (LNPKGWVGVILLLAGMVMIKF).

Belongs to the drug/metabolite transporter (DMT) superfamily. Small multidrug resistance (SMR) (TC 2.A.7.1) family. MdtI subfamily. Forms a complex with MdtJ.

The protein resides in the cell inner membrane. Catalyzes the excretion of spermidine. The polypeptide is Spermidine export protein MdtI (Salmonella paratyphi A (strain ATCC 9150 / SARB42)).